The primary structure comprises 90 residues: uncharacterized protein (90 aa).

This is an uncharacterized protein from Thermoproteus tenax (TTV1).